Here is a 157-residue protein sequence, read N- to C-terminus: Large ribosomal subunit protein eL24 (157 aa).

Lys-2 is covalently cross-linked (Glycyl lysine isopeptide (Lys-Gly) (interchain with G-Cter in SUMO2)). Glu-4 carries the ADP-ribosyl glutamic acid modification. Lys-27 carries the N6-acetyllysine; alternate modification. Lys-27 participates in a covalent cross-link: Glycyl lysine isopeptide (Lys-Gly) (interchain with G-Cter in SUMO2); alternate. Lys-35 participates in a covalent cross-link: Glycyl lysine isopeptide (Lys-Gly) (interchain with G-Cter in SUMO2). At Lys-77 the chain carries N6-acetyllysine. A Phosphothreonine modification is found at Thr-83. Position 86 is a phosphoserine (Ser-86). An N6-acetyllysine modification is found at Lys-93. The span at 106 to 117 (EQAIRAAKEAKK) shows a compositional bias: basic and acidic residues. Residues 106–157 (EQAIRAAKEAKKAKQASKKTAMAAAKAPTKAAPKQKIVKPVKVSAPRVGGKR) form a disordered region. The segment covering 123 to 140 (KKTAMAAAKAPTKAAPKQ) has biased composition (low complexity). Lys-131 is subject to N6-succinyllysine. Residue Lys-147 forms a Glycyl lysine isopeptide (Lys-Gly) (interchain with G-Cter in SUMO2) linkage. Ser-149 is modified (phosphoserine).

This sequence belongs to the eukaryotic ribosomal protein eL24 family. As to quaternary structure, component of the large ribosomal subunit. In terms of processing, mono-ADP-ribosylation at Glu-4 by PARP16 inhibits polysome assembly and mRNA loading, thereby inhibiting protein translation.

It is found in the cytoplasm. In terms of biological role, component of the large ribosomal subunit. The ribosome is a large ribonucleoprotein complex responsible for the synthesis of proteins in the cell. The sequence is that of Large ribosomal subunit protein eL24 (RPL24) from Bos taurus (Bovine).